Reading from the N-terminus, the 909-residue chain is Zinc finger and BTB domain-containing protein 41 (909 aa).

The 65-residue stretch at 88 to 152 folds into the BTB domain; it reads CDLLIIVEGK…LYTSEFFVYK (65 aa). The C2H2-type 1 zinc-finger motif lies at 207-230; sequence HQCKFCSRHFCYKKSLENHLAKTH. A disordered region spans residues 252-344; the sequence is RSKRNRKCPV…PEAGDSVGNV (93 aa). Acidic residues predominate over residues 266–275; the sequence is TSDDEQESGD. The segment covering 284-295 has biased composition (basic and acidic residues); the sequence is NFDKEKSDRNDS. Residues 296–322 are compositionally biased toward acidic residues; that stretch reads EDPGSEYNAEEDELEEEMSDEYSDIEE. 13 C2H2-type zinc fingers span residues 361-383, 389-411, 422-445, 463-485, 491-514, 518-541, 547-569, 575-597, 603-625, 631-654, 668-690, 696-718, and 724-747; these read LQCP…TRVH, FECD…RKKH, HKCP…KRFH, WKCD…MILH, FKCT…EKFH, FPCD…ECTH, WTCF…LRIH, HLCS…LRVH, YECD…KKIH, HQCE…KSVH, HQCD…FRTH, YKCQ…LVIH, and FNCQ…DHVH.

Its subcellular location is the nucleus. Its function is as follows. May be involved in transcriptional regulation. This Homo sapiens (Human) protein is Zinc finger and BTB domain-containing protein 41 (ZBTB41).